We begin with the raw amino-acid sequence, 383 residues long: Probable disease resistance protein At4g19060 (383 aa).

Residues 36-84 (YEKWSSGKQRGSSSKHGNQSTHGDSSPTRNSSGSSKKGRPKANRVETSS) are disordered. Over residues 41 to 70 (SGKQRGSSSKHGNQSTHGDSSPTRNSSGSS) the composition is skewed to polar residues. 2 consecutive NB-ARC domains span residues 75-184 (PKAN…MFKH) and 207-281 (VKEK…LAKA). 121 to 128 (GKYGVGKT) lines the ATP pocket.

In terms of biological role, possible disease resistance protein. In Arabidopsis thaliana (Mouse-ear cress), this protein is Probable disease resistance protein At4g19060.